A 522-amino-acid polypeptide reads, in one-letter code: Proactivator polypeptide-like 1 (522 aa).

Positions 1 to 17 (MLCALILWSGLLGAARA) are cleaved as a signal peptide. A propeptide spanning residues 18 to 59 (SPISVPRECAKGSEVWCQDLQAAAKCRAVRHCQSAVWNKPTV) is cleaved from the precursor. The 41-residue stretch at 19–59 (PISVPRECAKGSEVWCQDLQAAAKCRAVRHCQSAVWNKPTV) folds into the Saposin A-type 1 domain. 4 consecutive Saposin B-type domains span residues 60–144 (KSLP…EPLQ), 183–261 (EGAV…ERES), 291–371 (LGLT…GSKR), and 393–474 (QGSF…HGPK). Cystine bridges form between cysteine 64–cysteine 140, cysteine 67–cysteine 134, and cysteine 95–cysteine 107. The propeptide occupies 146 to 183 (HLAETTSERPLTQEDANEVMAPFLSNGALSFHPSQMPE). Cystine bridges form between cysteine 187–cysteine 257, cysteine 190–cysteine 251, and cysteine 216–cysteine 227. Residue asparagine 204 is glycosylated (N-linked (GlcNAc...) asparagine). The propeptide occupies 261-290 (SAHWLTRVAAVDGVPSLEMEMPRTNELQMQ). Cystine bridges form between cysteine 295/cysteine 367, cysteine 298/cysteine 361, and cysteine 326/cysteine 337. An N-linked (GlcNAc...) (high mannose) asparagine glycan is attached at asparagine 312. The propeptide occupies 371–392 (RRARSISRAVATTPSLPVDEEN). Intrachain disulfides connect cysteine 397–cysteine 470, cysteine 400–cysteine 464, and cysteine 428–cysteine 439. Residues 475-522 (TPLLGTDQCVMGPSFWCKSPEAAEMCNALEHCQRLVWKKPVSKINEQP) constitute a propeptide that is removed on maturation. A Saposin A-type 2 domain is found at 476–516 (PLLGTDQCVMGPSFWCKSPEAAEMCNALEHCQRLVWKKPVS).

Its subcellular location is the secreted. In terms of biological role, may activate the lysosomal degradation of sphingolipids. The sequence is that of Proactivator polypeptide-like 1 (Psapl1) from Mus musculus (Mouse).